The chain runs to 234 residues: Purine nucleoside phosphorylase DeoD-type (234 aa).

Histidine 4 contributes to the a purine D-ribonucleoside binding site. Phosphate contacts are provided by residues glycine 20, arginine 24, arginine 43, and 87–90; that span reads RVGT. Residues 179-181 and 203-204 contribute to the a purine D-ribonucleoside site; these read EME and SN.

Belongs to the PNP/UDP phosphorylase family. As to quaternary structure, homohexamer; trimer of homodimers.

It catalyses the reaction a purine D-ribonucleoside + phosphate = a purine nucleobase + alpha-D-ribose 1-phosphate. The enzyme catalyses a purine 2'-deoxy-D-ribonucleoside + phosphate = a purine nucleobase + 2-deoxy-alpha-D-ribose 1-phosphate. Its function is as follows. Catalyzes the reversible phosphorolytic breakdown of the N-glycosidic bond in the beta-(deoxy)ribonucleoside molecules, with the formation of the corresponding free purine bases and pentose-1-phosphate. This chain is Purine nucleoside phosphorylase DeoD-type, found in Latilactobacillus sakei subsp. sakei (strain 23K) (Lactobacillus sakei subsp. sakei).